Reading from the N-terminus, the 104-residue chain is Turripeptide OL55 (104 aa).

In terms of processing, contains 8 disulfide bonds. Expressed by the venom duct.

It localises to the secreted. Its function is as follows. Acts as a neurotoxin by inhibiting an ion channel. This chain is Turripeptide OL55, found in Iotyrris olangoensis (Sea snail).